The chain runs to 116 residues: Ribonuclease T (116 aa).

The Exonuclease domain maps to 18-99 (KRAILVGHNS…YDTEKTAELF (82 aa)). The active-site Proton donor/acceptor is H86.

The protein belongs to the RNase T family. In terms of assembly, homodimer.

Its function is as follows. Trims short 3' overhangs of a variety of RNA species, leaving a one or two nucleotide 3' overhang. Responsible for the end-turnover of tRNA: specifically removes the terminal AMP residue from uncharged tRNA (tRNA-C-C-A). Also appears to be involved in tRNA biosynthesis. In Azotobacter vinelandii, this protein is Ribonuclease T.